The following is a 200-amino-acid chain: NAD(P)H dehydrogenase (quinone) (200 aa).

The Flavodoxin-like domain occupies 4 to 191 (ILVLYHSLWG…TIARFQGRHV (188 aa)). Residues 10–15 (SLWGHV) and 79–81 (TRF) contribute to the FMN site. W12 is a binding site for NAD(+). W99 is a binding site for substrate. FMN is bound by residues 114 to 120 (STATQHG) and H135.

It belongs to the WrbA family. Requires FMN as cofactor.

The catalysed reaction is a quinone + NADH + H(+) = a quinol + NAD(+). It carries out the reaction a quinone + NADPH + H(+) = a quinol + NADP(+). This chain is NAD(P)H dehydrogenase (quinone), found in Acidithiobacillus ferrooxidans (strain ATCC 53993 / BNL-5-31) (Leptospirillum ferrooxidans (ATCC 53993)).